A 210-amino-acid chain; its full sequence is Na(+)-translocating NADH-quinone reductase subunit D (210 aa).

The next 6 membrane-spanning stretches (helical) occupy residues 14–34 (PIISNNPIALQILGVCSALAV), 42–62 (LVMTIALTAVTALSNLFISMI), 72–92 (IIVQMTIIASLVIVVDQVLQA), 103–123 (VFVGLIITNCIVMGRAEAYAM), 131–151 (FMDGIGNGLGYGAILLSVGFV), and 178–198 (NGLLLLPPSAFFLIASLIWII).

Belongs to the NqrDE/RnfAE family. Composed of six subunits; NqrA, NqrB, NqrC, NqrD, NqrE and NqrF.

The protein localises to the cell inner membrane. The catalysed reaction is a ubiquinone + n Na(+)(in) + NADH + H(+) = a ubiquinol + n Na(+)(out) + NAD(+). Functionally, NQR complex catalyzes the reduction of ubiquinone-1 to ubiquinol by two successive reactions, coupled with the transport of Na(+) ions from the cytoplasm to the periplasm. NqrA to NqrE are probably involved in the second step, the conversion of ubisemiquinone to ubiquinol. This Shewanella loihica (strain ATCC BAA-1088 / PV-4) protein is Na(+)-translocating NADH-quinone reductase subunit D.